We begin with the raw amino-acid sequence, 451 residues long: Tubulin alpha-1A chain (451 aa).

An MREC motif motif is present at residues 1 to 4; sequence MREC. 8 residues coordinate GTP: Q11, E71, S140, G144, T145, T179, N206, and N228. E71 provides a ligand contact to Mg(2+). E254 is an active-site residue. The tract at residues 432–451 is disordered; that stretch reads YEEVGVDSVEGEGEEEGEEY. The residue at position 445 (E445) is a 5-glutamyl polyglutamate.

This sequence belongs to the tubulin family. In terms of assembly, dimer of alpha and beta chains. A typical microtubule is a hollow water-filled tube with an outer diameter of 25 nm and an inner diameter of 15 nM. Alpha-beta heterodimers associate head-to-tail to form protofilaments running lengthwise along the microtubule wall with the beta-tubulin subunit facing the microtubule plus end conferring a structural polarity. Microtubules usually have 13 protofilaments but different protofilament numbers can be found in some organisms and specialized cells. The cofactor is Mg(2+). Some glutamate residues at the C-terminus are polyglycylated, resulting in polyglycine chains on the gamma-carboxyl group. Glycylation is mainly limited to tubulin incorporated into axonemes (cilia and flagella) whereas glutamylation is prevalent in neuronal cells, centrioles, axonemes, and the mitotic spindle. Both modifications can coexist on the same protein on adjacent residues, and lowering polyglycylation levels increases polyglutamylation, and reciprocally. The precise function of polyglycylation is still unclear. In terms of processing, some glutamate residues at the C-terminus are polyglutamylated, resulting in polyglutamate chains on the gamma-carboxyl group. Polyglutamylation plays a key role in microtubule severing by spastin (SPAST). SPAST preferentially recognizes and acts on microtubules decorated with short polyglutamate tails: severing activity by SPAST increases as the number of glutamates per tubulin rises from one to eight, but decreases beyond this glutamylation threshold. Post-translationally, undergoes a tyrosination/detyrosination cycle, the cyclic removal and re-addition of a C-terminal tyrosine residue by the enzymes tubulin tyrosine carboxypeptidase (MATCAP1, VASH1 or VASH2) and tubulin tyrosine ligase (TTL), respectively. Tyrosination promotes microtubule interaction with CAP-Gly microtubule plus-end tracking proteins. Tyrosinated tubulins regulate the initiation of dynein-driven motility. In terms of processing, detyrosination is involved in metaphase plate congression by guiding chromosomes during mitosis. Detyrosination increases microtubules-dependent mechanotransduction in dystrophic cardiac and skeletal muscle. In cardiomyocytes, detyrosinated microtubules are required to resist to contractile compression during contraction.

The protein localises to the cytoplasm. The protein resides in the cytoskeleton. The catalysed reaction is GTP + H2O = GDP + phosphate + H(+). In terms of biological role, tubulin is the major constituent of microtubules, a cylinder consisting of laterally associated linear protofilaments composed of alpha- and beta-tubulin heterodimers. Microtubules grow by the addition of GTP-tubulin dimers to the microtubule end, where a stabilizing cap forms. Below the cap, tubulin dimers are in GDP-bound state, owing to GTPase activity of alpha-tubulin. The polypeptide is Tubulin alpha-1A chain (TUBA1A) (Gallus gallus (Chicken)).